Consider the following 571-residue polypeptide: Proline--tRNA ligase (571 aa).

The protein belongs to the class-II aminoacyl-tRNA synthetase family. ProS type 1 subfamily. As to quaternary structure, homodimer.

It localises to the cytoplasm. It catalyses the reaction tRNA(Pro) + L-proline + ATP = L-prolyl-tRNA(Pro) + AMP + diphosphate. Catalyzes the attachment of proline to tRNA(Pro) in a two-step reaction: proline is first activated by ATP to form Pro-AMP and then transferred to the acceptor end of tRNA(Pro). As ProRS can inadvertently accommodate and process non-cognate amino acids such as alanine and cysteine, to avoid such errors it has two additional distinct editing activities against alanine. One activity is designated as 'pretransfer' editing and involves the tRNA(Pro)-independent hydrolysis of activated Ala-AMP. The other activity is designated 'posttransfer' editing and involves deacylation of mischarged Ala-tRNA(Pro). The misacylated Cys-tRNA(Pro) is not edited by ProRS. This Psychromonas ingrahamii (strain DSM 17664 / CCUG 51855 / 37) protein is Proline--tRNA ligase.